The following is a 1382-amino-acid chain: DNA-directed RNA polymerase subunit beta (1382 aa).

It belongs to the RNA polymerase beta chain family. The RNAP catalytic core consists of 2 alpha, 1 beta, 1 beta' and 1 omega subunit. When a sigma factor is associated with the core the holoenzyme is formed, which can initiate transcription.

It carries out the reaction RNA(n) + a ribonucleoside 5'-triphosphate = RNA(n+1) + diphosphate. Functionally, DNA-dependent RNA polymerase catalyzes the transcription of DNA into RNA using the four ribonucleoside triphosphates as substrates. This chain is DNA-directed RNA polymerase subunit beta, found in Aliarcobacter butzleri (strain RM4018) (Arcobacter butzleri).